The following is a 131-amino-acid chain: Protein Turandot M (131 aa).

Positions 1–23 are cleaved as a signal peptide; that stretch reads MNPTVYLSCLVVFSLFYLGKAQA.

Belongs to the Turandot family.

It localises to the secreted. Its function is as follows. A humoral factor that may play a role in stress tolerance. Requires Mekk1 expression in the fat body to regulate response to septic injury and consequent immune response. In Drosophila yakuba (Fruit fly), this protein is Protein Turandot M.